The sequence spans 147 residues: Cytochrome c-type biogenesis protein CcmE (147 aa).

Topologically, residues 1–7 (MTVRQRR) are cytoplasmic. The chain crosses the membrane as a helical; Signal-anchor for type II membrane protein span at residues 8–28 (FAMVILVVIGVSIATGLGLKA). Over 29 to 147 (FQENILFFYN…KTKANTEDKL (119 aa)) the chain is Periplasmic. Heme-binding residues include His-123 and Tyr-127.

This sequence belongs to the CcmE/CycJ family.

It localises to the cell inner membrane. In terms of biological role, heme chaperone required for the biogenesis of c-type cytochromes. Transiently binds heme delivered by CcmC and transfers the heme to apo-cytochromes in a process facilitated by CcmF and CcmH. This is Cytochrome c-type biogenesis protein CcmE from Nitrosococcus oceani (strain ATCC 19707 / BCRC 17464 / JCM 30415 / NCIMB 11848 / C-107).